Here is a 251-residue protein sequence, read N- to C-terminus: YlmG homolog protein 2, chloroplastic (251 aa).

The N-terminal 51 residues, 1–51, are a transit peptide targeting the chloroplast; the sequence is MEASANEPAMKSLKSNPSGPIPNFFVSLSSAFTQTPLVRSNKPNLLLLPPV. The next 2 helical transmembrane spans lie at 119–139 and 183–203; these read GFAA…NGLI and FIPP…VLNA. The segment covering 232 to 243 has biased composition (basic residues); that stretch reads VRRRRLSSHKDH. A disordered region spans residues 232–251; that stretch reads VRRRRLSSHKDHRPSSASMT.

Belongs to the YggT family.

It localises to the plastid. Its subcellular location is the chloroplast thylakoid membrane. In terms of biological role, not required for the biogenesis and accumulation of native cytochrome b6 in the thylakoid membrane. Not functionally involved in the pathway for covalent binding of the c-type heme to cytochrome b6. The polypeptide is YlmG homolog protein 2, chloroplastic (Arabidopsis thaliana (Mouse-ear cress)).